The following is a 296-amino-acid chain: Prostate androgen-regulated mucin-like protein 1 homolog (296 aa).

The first 20 residues, 1–20 (MVCKALITLCIFAAGLRVQG), serve as a signal peptide directing secretion. Over 21 to 244 (SPTPTLLPVS…EVENALSSGS (224 aa)) the chain is Extracellular. N62, N96, and N108 each carry an N-linked (GlcNAc...) asparagine glycan. Residues 73 to 220 (LTSQLPTHPR…SPQDTEPGKV (148 aa)) are disordered. Basic and acidic residues predominate over residues 80 to 96 (HPREEAVTSPPLKREVN). The span at 97-111 (STDSSPTGFSSNSSG) shows a compositional bias: low complexity. Residues 125-145 (SPETSVPATGSQSPTLLFSQG) are compositionally biased toward polar residues. 2 stretches are compositionally biased toward low complexity: residues 146 to 175 (PTSASTSPATSPSEPLSASVTSNHSSTVNN) and 195 to 205 (SHTPTSHVTEP). N-linked (GlcNAc...) asparagine glycosylation is present at N168. Positions 206–217 (VPKEKSPQDTEP) are enriched in basic and acidic residues. A helical transmembrane segment spans residues 245–265 (IAAITVTVIAVVLLVFGAAAY). The Cytoplasmic portion of the chain corresponds to 266–296 (LKIRHSSYGRLLDDHDYGSWGNYNNPLYDDS). Phosphoserine is present on S284.

The protein belongs to the PARM family. Post-translationally, highly N-glycosylated and O-glycosylated. Expressed in prostate. Detected in other organs at low levels, these include the heart and various tissues of the urogenital tract. Not detected in mammary gland.

It is found in the cell membrane. It localises to the golgi apparatus membrane. The protein resides in the endosome membrane. Functionally, may regulate TLP1 expression and telomerase activity, thus enabling certain prostatic cells to resist apoptosis. This chain is Prostate androgen-regulated mucin-like protein 1 homolog (Parm1), found in Rattus norvegicus (Rat).